The chain runs to 242 residues: Probable transcriptional regulatory protein Bcen2424_2294 (242 aa).

This sequence belongs to the TACO1 family.

It localises to the cytoplasm. The sequence is that of Probable transcriptional regulatory protein Bcen2424_2294 from Burkholderia cenocepacia (strain HI2424).